The sequence spans 617 residues: Membrane protein insertase YidC (617 aa).

Residues 8 to 28 (MFVAIGLSLLVLLGWQYFVAG) form a helical membrane-spanning segment. Polar residues predominate over residues 36–49 (QIEAQNKAAQQQPP). The interval 36–91 (QIEAQNKAAQQQPPGVTPDGVPSPSPKEGGPAAPAPGTLPTAQGGPVSREAALARS) is disordered. The segment covering 61–81 (PKEGGPAAPAPGTLPTAQGGP) has biased composition (low complexity). The next 4 membrane-spanning stretches (helical) occupy residues 387–407 (LFGN…LLFL), 461–481 (WPVL…FITI), 517–533 (FVHL…TMFV), and 549–569 (IFTF…AGLV).

This sequence belongs to the OXA1/ALB3/YidC family. Type 1 subfamily. In terms of assembly, interacts with the Sec translocase complex via SecD. Specifically interacts with transmembrane segments of nascent integral membrane proteins during membrane integration.

The protein localises to the cell inner membrane. In terms of biological role, required for the insertion and/or proper folding and/or complex formation of integral membrane proteins into the membrane. Involved in integration of membrane proteins that insert both dependently and independently of the Sec translocase complex, as well as at least some lipoproteins. Aids folding of multispanning membrane proteins. The polypeptide is Membrane protein insertase YidC (Methylobacterium radiotolerans (strain ATCC 27329 / DSM 1819 / JCM 2831 / NBRC 15690 / NCIMB 10815 / 0-1)).